Consider the following 71-residue polypeptide: uncharacterized protein (71 aa).

A helical transmembrane segment spans residues 44–66 (LFFLVFRRLFSWFLVLLPSPRFF).

Its subcellular location is the membrane. This is an uncharacterized protein from Saccharomyces cerevisiae (strain ATCC 204508 / S288c) (Baker's yeast).